Consider the following 223-residue polypeptide: Ribonuclease 3 (223 aa).

The 123-residue stretch at 3-125 folds into the RNase III domain; it reads LERLQKKLGY…IIAAVYLDAG (123 aa). Position 38 (Glu-38) interacts with Mg(2+). Residue Asp-42 is part of the active site. Asp-111 and Glu-114 together coordinate Mg(2+). Residue Glu-114 is part of the active site. The DRBM domain occupies 152–222; that stretch reads DPKTRLQEYL…ALQVIKVLGI (71 aa).

Belongs to the ribonuclease III family. In terms of assembly, homodimer. Mg(2+) serves as cofactor.

It is found in the cytoplasm. The catalysed reaction is Endonucleolytic cleavage to 5'-phosphomonoester.. Functionally, digests double-stranded RNA. Involved in the processing of primary rRNA transcript to yield the immediate precursors to the large and small rRNAs (23S and 16S). Processes some mRNAs, and tRNAs when they are encoded in the rRNA operon. Processes pre-crRNA and tracrRNA of type II CRISPR loci if present in the organism. The protein is Ribonuclease 3 of Glaesserella parasuis serovar 5 (strain SH0165) (Haemophilus parasuis).